Consider the following 520-residue polypeptide: MAYFNQHQSMISKRYLTFFSKSKKKKPFSAGQLIGLILGPLLFLLTLLFFHPQDLPWKGVYVLAITLWIATWWITEAIPIAATSLLPIVLLPLGHILTPEQVSSEYGNDIIFLFLGGFILAIAMERWNLHTRVALTIINLIGASTSKILLGFMVATGFLSMFVSNTAAVMIMIPIGLAIIKEAHDLQEANTNQTSIQKFEKSLVLAIGYAGTIGGLGTLIGTPPLIILKGQYMQHFGHEISFAKWMIVGIPTVIVLLGITWLYLRYVAFRHDLKYLPGGQTLIKQKLDELGKMKYEEKVVQTIFVLASLLWITREFLLKKWEVTSSVADGTIAIFISILLFVIPAKNTEKHRRIIDWEVAKELPWGVLILFGGGLALAKGISESGLAKWLGEQLKSLNGVSPILIVIVITIFVLFLTEVTSNTATATMILPILATLSVAVGVHPLLLMAPAAMAANCAYMLPVGTPPNAIIFGSGKISIKQMASVGFWVNLISAIIIILVVYYVMPIVLGIDINQPLPLK.

14 consecutive transmembrane segments (helical) span residues 30 to 50 (AGQL…LLFF), 55 to 75 (LPWK…WWIT), 77 to 97 (AIPI…GHIL), 104 to 124 (SEYG…AIAM), 160 to 180 (SMFV…LAII), 207 to 227 (IGYA…PLII), 242 to 262 (FAKW…ITWL), 298 to 318 (KVVQ…EFLL), 323 to 343 (VTSS…LFVI), 362 to 382 (ELPW…KGIS), 399 to 419 (GVSP…LTEV), 428 to 448 (MILP…LLLM), 452 to 472 (AMAA…AIIF), and 491 to 511 (LISA…VLGI).

This sequence belongs to the SLC13A/DASS transporter (TC 2.A.47) family. NADC subfamily.

The protein resides in the cell membrane. In terms of biological role, mediates the transport of the dicarboxylates fumarate, malate, and succinate across the cytoplasmic membrane via a Na(+)-electrochemical gradient. This chain is Sodium-dependent dicarboxylate transporter SdcS (sdcS), found in Staphylococcus aureus (strain MSSA476).